We begin with the raw amino-acid sequence, 610 residues long: Elongation factor 4 (610 aa).

A tr-type G domain is found at 12–194; that stretch reads EKIRNFSIIA…QIVEKVPAPQ (183 aa). GTP contacts are provided by residues 24 to 29 and 141 to 144; these read DHGKST and NKID.

This sequence belongs to the TRAFAC class translation factor GTPase superfamily. Classic translation factor GTPase family. LepA subfamily.

Its subcellular location is the cell membrane. The catalysed reaction is GTP + H2O = GDP + phosphate + H(+). Functionally, required for accurate and efficient protein synthesis under certain stress conditions. May act as a fidelity factor of the translation reaction, by catalyzing a one-codon backward translocation of tRNAs on improperly translocated ribosomes. Back-translocation proceeds from a post-translocation (POST) complex to a pre-translocation (PRE) complex, thus giving elongation factor G a second chance to translocate the tRNAs correctly. Binds to ribosomes in a GTP-dependent manner. The protein is Elongation factor 4 of Streptococcus thermophilus (strain ATCC BAA-250 / LMG 18311).